Here is a 360-residue protein sequence, read N- to C-terminus: UDP-N-acetylglucosamine--N-acetylmuramyl-(pentapeptide) pyrophosphoryl-undecaprenol N-acetylglucosamine transferase (360 aa).

Residues 15 to 17 (TGG), asparagine 124, arginine 165, serine 191, and glutamine 285 each bind UDP-N-acetyl-alpha-D-glucosamine.

Belongs to the glycosyltransferase 28 family. MurG subfamily.

It localises to the cell inner membrane. The enzyme catalyses di-trans,octa-cis-undecaprenyl diphospho-N-acetyl-alpha-D-muramoyl-L-alanyl-D-glutamyl-meso-2,6-diaminopimeloyl-D-alanyl-D-alanine + UDP-N-acetyl-alpha-D-glucosamine = di-trans,octa-cis-undecaprenyl diphospho-[N-acetyl-alpha-D-glucosaminyl-(1-&gt;4)]-N-acetyl-alpha-D-muramoyl-L-alanyl-D-glutamyl-meso-2,6-diaminopimeloyl-D-alanyl-D-alanine + UDP + H(+). It participates in cell wall biogenesis; peptidoglycan biosynthesis. Its function is as follows. Cell wall formation. Catalyzes the transfer of a GlcNAc subunit on undecaprenyl-pyrophosphoryl-MurNAc-pentapeptide (lipid intermediate I) to form undecaprenyl-pyrophosphoryl-MurNAc-(pentapeptide)GlcNAc (lipid intermediate II). This Gloeothece citriformis (strain PCC 7424) (Cyanothece sp. (strain PCC 7424)) protein is UDP-N-acetylglucosamine--N-acetylmuramyl-(pentapeptide) pyrophosphoryl-undecaprenol N-acetylglucosamine transferase.